Consider the following 512-residue polypeptide: Cytochrome P450 72A13 (512 aa).

The chain crosses the membrane as a helical span at residues 2–22; it reads EISVASVTVSVAVVVVSWWVW. Cys-460 is a heme binding site.

It belongs to the cytochrome P450 family. The cofactor is heme.

The protein resides in the membrane. This is Cytochrome P450 72A13 (CYP72A13) from Arabidopsis thaliana (Mouse-ear cress).